A 318-amino-acid chain; its full sequence is Receptor homology region, transmembrane domain- and RING domain-containing protein 5 (318 aa).

The signal sequence occupies residues 1-20; that stretch reads MNYSWITIMSLLVICKLASA. The Lumenal segment spans residues 22–163; it reads VVLIGKNTIL…IPGFGISSWS (142 aa). Cysteine 62 and cysteine 87 are joined by a disulfide. The 74-residue stretch at 70–143 folds into the PA domain; that stretch reads EKRSKYRSSY…RASGEVLKGY (74 aa). Asparagine 121 carries an N-linked (GlcNAc...) asparagine glycan. The chain crosses the membrane as a helical span at residues 164–184; that stretch reads IMGITFISLLAMSAILATCFV. Topologically, residues 185 to 318 are cytoplasmic; sequence VRRHQIRQSV…DLPIVVRVYL (134 aa). The segment at 233–275 adopts an RING-type; atypical zinc-finger fold; that stretch reads CAICIDDYCVGEKLRILPCKHKYHAVCIDSWLGRCRSFCPVCK.

The protein resides in the prevacuolar compartment membrane. The protein localises to the protein storage vacuole membrane. Involved in the trafficking of vacuolar proteins. May function as a sorting receptor for protein trafficking to the protein storage vacuole (PSV). The chain is Receptor homology region, transmembrane domain- and RING domain-containing protein 5 (RMR5) from Arabidopsis thaliana (Mouse-ear cress).